The primary structure comprises 570 residues: High-affinity hexose transporter HXT7 (570 aa).

Topologically, residues 1 to 60 (MSQDAAIAEQTPVEHLSAVDSASHSVLSTPSNKAERDEIKAYGEGEEHEPVVEIPKRPAS) are cytoplasmic. Residues 61–81 (AYVTVSIMCIMIAFGGFVFGW) traverse the membrane as a helical segment. The Extracellular segment spans residues 82–116 (DTGTISGFINQTDFIRRFGMKHKDGTNYLSKVRTG). The N-linked (GlcNAc...) asparagine glycan is linked to asparagine 91. Residues 117-137 (LIVSIFNIGCAIGGIILSKLG) form a helical membrane-spanning segment. Topologically, residues 138 to 143 (DMYGRK) are cytoplasmic. The helical transmembrane segment at 144–164 (VGLIVVVVIYIIGIIIQIASI) threads the bilayer. Over 165-174 (NKWYQYFIGR) the chain is Extracellular. Residues 175–195 (IISGLGVGGIAVLSPMLISEV) traverse the membrane as a helical segment. The Cytoplasmic portion of the chain corresponds to 196-201 (SPKHLR). Residues 202–222 (GTLVSCYQLMITAGIFLGYCT) form a helical membrane-spanning segment. At 223 to 236 (NFGTKNYSNSVQWR) the chain is on the extracellular side. N-linked (GlcNAc...) asparagine glycosylation occurs at asparagine 228. A helical membrane pass occupies residues 237 to 257 (VPLGLCFAWALFMIGGMTFVP). The Cytoplasmic segment spans residues 258-340 (ESPRYLAEVG…IQSLQQLTGD (83 aa)). Residues 341–357 (NYFFYYGTTIFKAVGLS) form a helical membrane-spanning segment. Residues 358–363 (DSFETS) are Extracellular-facing. Residues 364–381 (IVLGIVNFASTFVGIYVV) traverse the membrane as a helical segment. Residues 382-388 (ERYGRRT) lie on the Cytoplasmic side of the membrane. Residues 389–409 (CLLWGAASMTACMVVYASVGV) traverse the membrane as a helical segment. Residues 410 to 431 (TRLWPNGQDQPSSKGAGNCMIV) are Extracellular-facing. The chain crosses the membrane as a helical span at residues 432 to 452 (FACFYIFCFATTWAPIPYVVV). Topologically, residues 453-469 (SETFPLRVKSKAMSIAT) are cytoplasmic. Residues 470 to 490 (AANWLWGFLIGFFTPFITGAI) form a helical membrane-spanning segment. Residue asparagine 491 is a topological domain, extracellular. A helical membrane pass occupies residues 492–512 (FYYGYVFMGCLVFMFFYVLLV). Residues 513-570 (VPETKGLTLEEVNTMWEEGVLPWKSASWVPPSRRGANYDAEEMTHDDKPLYKRMFSTK) lie on the Cytoplasmic side of the membrane. The residue at position 556 (threonine 556) is a Phosphothreonine. Lysine 560 participates in a covalent cross-link: Glycyl lysine isopeptide (Lys-Gly) (interchain with G-Cter in ubiquitin).

The protein belongs to the major facilitator superfamily. Sugar transporter (TC 2.A.1.1) family.

It localises to the membrane. In terms of biological role, high-affinity glucose transporter. The sequence is that of High-affinity hexose transporter HXT7 (HXT7) from Saccharomyces cerevisiae (strain ATCC 204508 / S288c) (Baker's yeast).